The chain runs to 527 residues: UvrABC system protein C (527 aa).

A GIY-YIG domain is found at K9–I87. Residues D191–L226 form the UVR domain.

The protein belongs to the UvrC family. As to quaternary structure, interacts with UvrB in an incision complex.

The protein resides in the cytoplasm. In terms of biological role, the UvrABC repair system catalyzes the recognition and processing of DNA lesions. UvrC both incises the 5' and 3' sides of the lesion. The N-terminal half is responsible for the 3' incision and the C-terminal half is responsible for the 5' incision. This chain is UvrABC system protein C, found in Methanococcus maripaludis (strain DSM 14266 / JCM 13030 / NBRC 101832 / S2 / LL).